We begin with the raw amino-acid sequence, 561 residues long: Eukaryotic translation initiation factor 3 subunit D-1 (561 aa).

The segment at 98-164 is disordered; sequence VQKPPHQRGR…RGPPPKMRES (67 aa). Residues 100-121 show a composition bias toward basic residues; that stretch reads KPPHQRGRFRNMRNSRSGRGRN. A Phosphothreonine modification is found at T128. An RNA gate region spans residues 289–303; that stretch reads EFDLLTVNETSVEPP.

It belongs to the eIF-3 subunit D family. In terms of assembly, component of the eukaryotic translation initiation factor 3 (eIF-3) complex. The eIF-3 complex interacts with pix.

The protein localises to the cytoplasm. Functionally, mRNA cap-binding component of the eukaryotic translation initiation factor 3 (eIF-3) complex, which is involved in protein synthesis of a specialized repertoire of mRNAs and, together with other initiation factors, stimulates binding of mRNA and methionyl-tRNAi to the 40S ribosome. The eIF-3 complex specifically targets and initiates translation of a subset of mRNAs involved in cell proliferation. In the eIF-3 complex, eif3d specifically recognizes and binds the 7-methylguanosine cap of a subset of mRNAs. The protein is Eukaryotic translation initiation factor 3 subunit D-1 of Drosophila ananassae (Fruit fly).